Here is a 161-residue protein sequence, read N- to C-terminus: MVEQNLEKLQTDLVETEQRLAAIIDSFIELGVYVYDFPGTEDSMQGMVTNMQRNVDRMKQLNQQANDPESQLQNFLVPLDVLQYIEDGRNPDVYTREFVEAIRRSNQYQRAKIHGLNKLRDSLAEKIIDELPELQPHVESIIARTSPQRTDPISPSIVDKP.

The protein belongs to the Mediator complex subunit 10 family. As to quaternary structure, component of the Mediator complex.

Its subcellular location is the nucleus. In terms of biological role, component of the Mediator complex, a coactivator involved in the regulated transcription of nearly all RNA polymerase II-dependent genes. Mediator functions as a bridge to convey information from gene-specific regulatory proteins to the basal RNA polymerase II transcription machinery. Mediator is recruited to promoters by direct interactions with regulatory proteins and serves as a scaffold for the assembly of a functional preinitiation complex with RNA polymerase II and the general transcription factors. The chain is Mediator of RNA polymerase II transcription subunit 10 (NUT2) from Kluyveromyces lactis (strain ATCC 8585 / CBS 2359 / DSM 70799 / NBRC 1267 / NRRL Y-1140 / WM37) (Yeast).